Here is a 173-residue protein sequence, read N- to C-terminus: MTGLNTAGADRDLATAELNRELQDKGFLLTTTEDIINWARNGSLHWMTFGLACCAVEMMQTSMPRYDLERFGTAPRASPRQSDLMIVAGTLTNKMAPALRKVYDQMPEPRYVISMGSCANGGGYYHYSYSVVRGCDRIVPVDIYVPGCPPTAEALLYGILQLQRRASGAPARW.

C53, C54, C118, and C148 together coordinate [4Fe-4S] cluster.

This sequence belongs to the complex I 20 kDa subunit family. As to quaternary structure, NDH-1 is composed of at least 14 different subunits, Nqo1 to Nqo14. The complex has a L-shaped structure, with the hydrophobic arm (subunits Nqo7, Nqo8, Nqo10 to Nqo14) embedded in the inner membrane and the hydrophilic peripheral arm (subunits Nqo1 to Nqo6, Nqo9) protruding into the bacterial cytoplasm. The hydrophilic domain contains all the redox centers. The cofactor is [4Fe-4S] cluster.

Its subcellular location is the cell inner membrane. The catalysed reaction is a quinone + NADH + 5 H(+)(in) = a quinol + NAD(+) + 4 H(+)(out). Functionally, NDH-1 shuttles electrons from NADH, via FMN and iron-sulfur (Fe-S) centers, to quinones in the respiratory chain. The immediate electron acceptor for the enzyme in this species is believed to be ubiquinone. Couples the redox reaction to proton translocation (for every two electrons transferred, four hydrogen ions are translocated across the cytoplasmic membrane), and thus conserves the redox energy in a proton gradient. This Paracoccus denitrificans protein is NADH-quinone oxidoreductase subunit 6 (nqo6).